Consider the following 410-residue polypeptide: Cell division protein FtsZ (410 aa).

Residues 22–26, 109–111, Glu140, Arg144, and Asp188 each bind GTP; these read GGGGN and GTG. The segment at 318-410 is disordered; it reads ESKKDRKPHR…STPPFFRRKR (93 aa). Residues 330–344 show a composition bias toward polar residues; that stretch reads RQAVQPMQQTTQSVE. The span at 360 to 398 shows a compositional bias: basic and acidic residues; sequence WDIRREQNTRPKVDESSLEQVDKKEFDTFHREEPNHNDD.

This sequence belongs to the FtsZ family. In terms of assembly, homodimer. Polymerizes to form a dynamic ring structure in a strictly GTP-dependent manner. Interacts directly with several other division proteins.

The protein localises to the cytoplasm. Essential cell division protein that forms a contractile ring structure (Z ring) at the future cell division site. The regulation of the ring assembly controls the timing and the location of cell division. One of the functions of the FtsZ ring is to recruit other cell division proteins to the septum to produce a new cell wall between the dividing cells. Binds GTP and shows GTPase activity. This chain is Cell division protein FtsZ, found in Enterococcus faecalis (strain ATCC 700802 / V583).